A 131-amino-acid chain; its full sequence is Large ribosomal subunit protein bL17 (131 aa).

It belongs to the bacterial ribosomal protein bL17 family. In terms of assembly, part of the 50S ribosomal subunit. Contacts protein L32.

This Teredinibacter turnerae (strain ATCC 39867 / T7901) protein is Large ribosomal subunit protein bL17.